Consider the following 210-residue polypeptide: Chloramphenicol acetyltransferase (210 aa).

His-79 is an active-site residue.

The protein belongs to the transferase hexapeptide repeat family.

The catalysed reaction is chloramphenicol + acetyl-CoA = chloramphenicol 3-acetate + CoA. Its function is as follows. This enzyme is an effector of chloramphenicol resistance in bacteria. The chain is Chloramphenicol acetyltransferase (cat) from Morganella morganii (Proteus morganii).